Reading from the N-terminus, the 267-residue chain is GTP cyclohydrolase FolE2 (267 aa).

It belongs to the GTP cyclohydrolase IV family.

The enzyme catalyses GTP + H2O = 7,8-dihydroneopterin 3'-triphosphate + formate + H(+). It functions in the pathway cofactor biosynthesis; 7,8-dihydroneopterin triphosphate biosynthesis; 7,8-dihydroneopterin triphosphate from GTP: step 1/1. Functionally, converts GTP to 7,8-dihydroneopterin triphosphate. This Geobacter sp. (strain M21) protein is GTP cyclohydrolase FolE2.